The chain runs to 380 residues: MRYTSLFTAVTAALASTAAAVGVSGAAEGFAKGVTGGGNASPVYPKTNDELVSYLGDSQARVIVLTKTFDFRGTEGTTSGTGCAPWGTNAKCQLAINQNSWCDNYQPNAPKVSVSYDNAGVLGITVNSNKSLIGQGSAGVIKGKGLRIVSGAKNVIIQNIAITDINPKYVWGGDAITINNADLVWIDHVTTARIGRQHIVLGTQADNRITISNCYIDGVTDYSATCNGYHYWGIYLDGSNDMVTMKGNYIYHTSGRSPKVQGNTLLHAVNNYWYDNAGHAFEIGSGAYVVAEGNVFQNVKAVAESPISGKLFSSPDASTNKVCSSYLGHTCQINGFGSSGAFSQADTDILSKFKGKNIASAAAYNTVVSSVTANAGNGKL.

An N-terminal signal peptide occupies residues 1-20 (MRYTSLFTAVTAALASTAAA). 2 disulfides stabilise this stretch: C83–C102 and C92–C226. Residue N129 is glycosylated (N-linked (GlcNAc...) asparagine). The active site involves R256. Residues C323 and C331 are joined by a disulfide bond.

Belongs to the polysaccharide lyase 1 family.

The protein localises to the secreted. It catalyses the reaction Eliminative cleavage of (1-&gt;4)-alpha-D-galacturonan methyl ester to give oligosaccharides with 4-deoxy-6-O-methyl-alpha-D-galact-4-enuronosyl groups at their non-reducing ends.. Its function is as follows. Pectinolytic enzymes consist of four classes of enzymes: pectin lyase, polygalacturonase, pectin methylesterase and rhamnogalacturonase. Among pectinolytic enzymes, pectin lyase is the most important in depolymerization of pectin, since it cleaves internal glycosidic bonds of highly methylated pectins. The sequence is that of Probable pectin lyase A (pelA) from Aspergillus fumigatus (strain ATCC MYA-4609 / CBS 101355 / FGSC A1100 / Af293) (Neosartorya fumigata).